A 953-amino-acid chain; its full sequence is Translation initiation factor IF-2 (953 aa).

2 disordered regions span residues 48–240 (SSFS…AQQE) and 279–363 (TKLK…TERK). Composition is skewed to basic and acidic residues over residues 80–89 (TGSEHVEKTQ), 98–111 (FKAEREARAKEQAA), and 140–188 (QGDK…ENHK). A compositionally biased stretch (polar residues) spans 191-207 (RFTNQKKQGRQEPQSKS). Residues 229–240 (RQSETRFRAQQE) are compositionally biased toward basic and acidic residues. Residues 282-291 (KSSNISAKST) show a composition bias toward polar residues. Residues 300–317 (ARPEKNRELTHHSQEGQK) show a composition bias toward basic and acidic residues. Low complexity predominate over residues 322–338 (SWNSQNQVRNQKNSNWN). Positions 339–348 (KNKKTKKGKN) are enriched in basic residues. A tr-type G domain is found at 454 to 623 (ERAPVVTIMG…LLVAEVEELK (170 aa)). Residues 463–470 (GHVDHGKT) are G1. 463-470 (GHVDHGKT) lines the GTP pocket. The segment at 488–492 (GITQH) is G2. The tract at residues 509–512 (DTPG) is G3. GTP contacts are provided by residues 509-513 (DTPGH) and 563-566 (NKID). Positions 563–566 (NKID) are G4. Residues 599-601 (SAK) form a G5 region.

The protein belongs to the TRAFAC class translation factor GTPase superfamily. Classic translation factor GTPase family. IF-2 subfamily.

The protein resides in the cytoplasm. Functionally, one of the essential components for the initiation of protein synthesis. Protects formylmethionyl-tRNA from spontaneous hydrolysis and promotes its binding to the 30S ribosomal subunits. Also involved in the hydrolysis of GTP during the formation of the 70S ribosomal complex. In Streptococcus pyogenes serotype M1, this protein is Translation initiation factor IF-2.